The chain runs to 85 residues: MCASRLVLLLGLLLCVGAHLSSGQHWSHGWYPGGKRELDSFGTSEISEEIKLCEAGECSYLRPQRRNILRNILLDALARELQKRK.

The first 23 residues, 1-23 (MCASRLVLLLGLLLCVGAHLSSG), serve as a signal peptide directing secretion. Gln24 bears the Pyrrolidone carboxylic acid mark. Position 33 is a glycine amide (Gly33).

The protein belongs to the GnRH family. As to expression, midbrain tegmentum.

Its subcellular location is the secreted. Its function is as follows. Stimulates the secretion of gonadotropins. The sequence is that of Progonadoliberin-2 (gnrh2) from Verasper moseri (Barfin flounder).